A 110-amino-acid polypeptide reads, in one-letter code: MKNWIFLAVSIFGEVIATSALKSSHGFTRLVPSVVVVAGYGLAFYFLSLALKSIPVGIAYAVWAGLGIVLVAAIAWIFHGQKLDFWAFIGMGLIVSGVAVLNLLSKVSAH.

The next 4 membrane-spanning stretches (helical) occupy residues 1 to 21, 31 to 51, 58 to 78, and 85 to 105; these read MKNW…TSAL, VPSV…SLAL, IAYA…AWIF, and FWAF…NLLS.

This sequence belongs to the drug/metabolite transporter (DMT) superfamily. Small multidrug resistance (SMR) (TC 2.A.7.1) family.

It localises to the cell membrane. In terms of biological role, multidrug exporter. Is implicated for the resistance to bacteriocidal quaternary ammonium compounds. The chain is Quaternary ammonium compound-resistance protein QacF (qacF) from Klebsiella aerogenes (Enterobacter aerogenes).